We begin with the raw amino-acid sequence, 252 residues long: 3-dehydroquinate dehydratase (252 aa).

3-dehydroquinate is bound by residues 46–48 (EWR) and arginine 82. Histidine 143 serves as the catalytic Proton donor/acceptor. The active-site Schiff-base intermediate with substrate is lysine 170. Residues arginine 212, serine 231, and glutamine 235 each contribute to the 3-dehydroquinate site.

This sequence belongs to the type-I 3-dehydroquinase family. As to quaternary structure, homodimer.

It carries out the reaction 3-dehydroquinate = 3-dehydroshikimate + H2O. The protein operates within metabolic intermediate biosynthesis; chorismate biosynthesis; chorismate from D-erythrose 4-phosphate and phosphoenolpyruvate: step 3/7. Functionally, involved in the third step of the chorismate pathway, which leads to the biosynthesis of aromatic amino acids. Catalyzes the cis-dehydration of 3-dehydroquinate (DHQ) and introduces the first double bond of the aromatic ring to yield 3-dehydroshikimate. The polypeptide is 3-dehydroquinate dehydratase (Listeria welshimeri serovar 6b (strain ATCC 35897 / DSM 20650 / CCUG 15529 / CIP 8149 / NCTC 11857 / SLCC 5334 / V8)).